Reading from the N-terminus, the 348-residue chain is tRNA pseudouridine synthase D (348 aa).

Residue Phe-26 participates in substrate binding. Asp-79 serves as the catalytic Nucleophile. Asn-128 is a binding site for substrate. The TRUD domain maps to 154–302; sequence GVPNYFGSQR…VDPARRALLL (149 aa). Position 328 (Phe-328) interacts with substrate.

Belongs to the pseudouridine synthase TruD family.

It catalyses the reaction uridine(13) in tRNA = pseudouridine(13) in tRNA. Its function is as follows. Responsible for synthesis of pseudouridine from uracil-13 in transfer RNAs. This is tRNA pseudouridine synthase D from Serratia proteamaculans (strain 568).